Reading from the N-terminus, the 250-residue chain is MTLSHGELLYEGKAKRIYASADDQQVLVEFKNDATAFNAQKKAQLEHKGRLNCQISACLFELLERHGIPTHYVGVADATWMVVQRVEVIPIEVVLRNTATGSLCRETPIPQGTALDPALLDLYYKDDALGDPLLTDARIALLGVVSAELRQRMEALARQVNAVLQPFFKDLGLQLVDFKLELGLNQAGELLVADEISPDTCRLWDLSSTDANERILDKDRFRKDLGGVIEAYGEVCKRVQGACPQPRNCG.

Belongs to the SAICAR synthetase family.

The enzyme catalyses 5-amino-1-(5-phospho-D-ribosyl)imidazole-4-carboxylate + L-aspartate + ATP = (2S)-2-[5-amino-1-(5-phospho-beta-D-ribosyl)imidazole-4-carboxamido]succinate + ADP + phosphate + 2 H(+). Its pathway is purine metabolism; IMP biosynthesis via de novo pathway; 5-amino-1-(5-phospho-D-ribosyl)imidazole-4-carboxamide from 5-amino-1-(5-phospho-D-ribosyl)imidazole-4-carboxylate: step 1/2. The sequence is that of Phosphoribosylaminoimidazole-succinocarboxamide synthase from Synechococcus sp. (strain WH7803).